We begin with the raw amino-acid sequence, 271 residues long: Urease accessory protein UreD (271 aa).

This sequence belongs to the UreD family. As to quaternary structure, ureD, UreF and UreG form a complex that acts as a GTP-hydrolysis-dependent molecular chaperone, activating the urease apoprotein by helping to assemble the nickel containing metallocenter of UreC. The UreE protein probably delivers the nickel.

The protein resides in the cytoplasm. Functionally, required for maturation of urease via the functional incorporation of the urease nickel metallocenter. The chain is Urease accessory protein UreD from Halalkalibacterium halodurans (strain ATCC BAA-125 / DSM 18197 / FERM 7344 / JCM 9153 / C-125) (Bacillus halodurans).